A 227-amino-acid chain; its full sequence is Triosephosphate isomerase (227 aa).

6-8 (NLK) serves as a coordination point for substrate. His85 (electrophile) is an active-site residue. Catalysis depends on Glu152, which acts as the Proton acceptor. Residues Gly158 and Ser188 each coordinate substrate.

It belongs to the triosephosphate isomerase family. Homodimer.

It is found in the cytoplasm. It carries out the reaction D-glyceraldehyde 3-phosphate = dihydroxyacetone phosphate. It functions in the pathway carbohydrate biosynthesis; gluconeogenesis. The protein operates within carbohydrate degradation; glycolysis; D-glyceraldehyde 3-phosphate from glycerone phosphate: step 1/1. Its function is as follows. Involved in the gluconeogenesis. Catalyzes stereospecifically the conversion of dihydroxyacetone phosphate (DHAP) to D-glyceraldehyde-3-phosphate (G3P). This chain is Triosephosphate isomerase, found in Campylobacter concisus (strain 13826).